The primary structure comprises 611 residues: MSSESPNLPAAAGTVPDNHPPPPPVVTAAEAGSDDSPKGVASKLSAAGISNWAKNLKVPQPFASTQNDSGVENTEKSAFAKFTSGLGIRLSPKSPQTNDTTTEGTSSATESSFIGTITKGLVDTSKNAVKAVQVKARHAVSQNKRRYQEGGFDLDLTYITENIIAMGFPAGDMSSGFFGYVEGFYRNQMEEVINFLETQHKGKYKVYNLCSERLYDVSLFEGKVASFPFDDHNCPPIHLVTSFCQSAYSWLKEDIENVVVVHCKAGMARTGLMICSLLLYLKFFPTAEECMDFYNQKRCVDGKGLVLPSQIRYVKYFERILTYFNGENQPGRRCMLRGFRLHRCPYWIRPSITISDHNGVLFTTKKHPRTKDLSPEDFWFSAPKKGVMVFALPGEPGLTELAGDFKIQFHDRQGDFYCWLNTTMMENRVILKTSELDGFDKRKLPSPGFMVEVVLADINATIPTNPSSETASKTPEETSAANSSPVDGSASVPGPDKETENPDKDDVFSDNEGDSTGPTKTTSSASSQTPEAKKSADETAVLTKATEKVSISGNKGSSQPVQGVTVSKGEATEKPSGAGVNASSSSESEFKVMAADASVFSFGDEDDFESD.

Disordered regions lie at residues 1–42 (MSSE…GVAS) and 87–109 (GIRL…SSAT). S91 bears the Phosphoserine mark. The segment covering 100–109 (TTTEGTSSAT) has biased composition (low complexity). Residues 145 to 324 (RRYQEGGFDL…KYFERILTYF (180 aa)) enclose the Phosphatase tensin-type domain. Catalysis depends on C263, which acts as the Phosphocysteine intermediate. Residues 331 to 458 (GRRCMLRGFR…FMVEVVLADI (128 aa)) form the C2 tensin-type domain. Residues 462-486 (IPTNPSSETASKTPEETSAANSSPV) are compositionally biased toward polar residues. The disordered stretch occupies residues 462–589 (IPTNPSSETA…VNASSSSESE (128 aa)). A compositionally biased stretch (basic and acidic residues) spans 495–507 (PDKETENPDKDDV). S509 carries the post-translational modification Phosphoserine. Composition is skewed to polar residues over residues 514–530 (DSTG…SQTP) and 549–565 (VSIS…QGVT).

This sequence belongs to the PTEN phosphatase protein family. In terms of tissue distribution, expressed in seedlings, roots, stems, leaves, flowers and siliques. However, at protein level, not observed in older leaves and mature siliques.

It catalyses the reaction O-phospho-L-tyrosyl-[protein] + H2O = L-tyrosyl-[protein] + phosphate. It carries out the reaction a 1,2-diacyl-sn-glycero-3-phospho-(1D-myo-inositol-3,4,5-trisphosphate) + H2O = a 1,2-diacyl-sn-glycero-3-phospho-(1D-myo-inositol-4,5-bisphosphate) + phosphate. Binds phosphatidic acid. Protein tyrosine phosphatase that also exhibits lipid phosphatase activity. Hydrolyzed poorly p-nitrophenyl phosphate (p-NPP). Can use PtdIns isomers as substrates. Removes efficiently phosphate from the D3 position of the inositol ring, less from the D4 position and not at all from the D5 position on monophosphorylated PtdIns isomers (PIPs). The presence of a phosphate group in the D5 position on PIP(2) isomers reduces lipid phosphatase activity. Mostly active on PtdIns(3)P and PtdIns(3,4)P(2), to a lower extent, on PtdIns(4)P and PtdIns(3,5)P(2), but barely against PtdIns(3,4,5)P(3) as substrate. This Arabidopsis thaliana (Mouse-ear cress) protein is Phosphatidylinositol 3,4,5-trisphosphate 3-phosphatase and protein-tyrosine-phosphatase PTEN2A.